The following is a 290-amino-acid chain: Fructokinase (290 aa).

An ATP-binding site is contributed by Thr130. Residues His153, Cys169, His172, and Cys175 each contribute to the Zn(2+) site. ATP is bound by residues Pro183 and Gly231–Lys235.

This sequence belongs to the ROK (NagC/XylR) family. In terms of assembly, homodimer. The cofactor is Mg(2+).

The catalysed reaction is D-fructose + ATP = D-fructose 6-phosphate + ADP + H(+). Inactivated by EDTA. Inhibition by zinc ions (Potential). This Lactococcus lactis subsp. cremoris (Streptococcus cremoris) protein is Fructokinase (scrK).